Here is a 434-residue protein sequence, read N- to C-terminus: Putative nuclease OPG089 (434 aa).

Residues aspartate 33, aspartate 74, glutamate 168, aspartate 170, aspartate 196, and aspartate 198 each contribute to the Mg(2+) site.

The protein belongs to the XPG/RAD2 endonuclease family. FEN1 subfamily. Requires Mg(2+) as cofactor.

It localises to the virion. In terms of biological role, putative nuclease that seems to be required for double-strand break repair, homologous recombination, and production of full-length viral genomic DNA. The protein is Putative nuclease OPG089 (OPG089) of Homo sapiens (Human).